The following is a 111-amino-acid chain: Iron-sulfur cluster insertion protein ErpA (111 aa).

Positions 39, 103, and 105 each coordinate iron-sulfur cluster.

It belongs to the HesB/IscA family. As to quaternary structure, homodimer. Iron-sulfur cluster is required as a cofactor.

Its function is as follows. Required for insertion of 4Fe-4S clusters for at least IspG. The sequence is that of Iron-sulfur cluster insertion protein ErpA from Acinetobacter baumannii (strain SDF).